The primary structure comprises 429 residues: Phosphoribosylamine--glycine ligase (429 aa).

An ATP-grasp domain is found at 109-316 (KDFLARHQIP…LVDLCLAAID (208 aa)). 135 to 196 (VREQGAPIVV…EEFLDGEEAS (62 aa)) is a binding site for ATP. A disordered region spans residues 212–235 (SQDHKRVGDKDTGPNTGGMGAYSP). A compositionally biased stretch (basic and acidic residues) spans 213-223 (QDHKRVGDKDT). Mg(2+) contacts are provided by Glu286 and Asn288.

Belongs to the GARS family. Requires Mg(2+) as cofactor. The cofactor is Mn(2+).

The catalysed reaction is 5-phospho-beta-D-ribosylamine + glycine + ATP = N(1)-(5-phospho-beta-D-ribosyl)glycinamide + ADP + phosphate + H(+). Its pathway is purine metabolism; IMP biosynthesis via de novo pathway; N(1)-(5-phospho-D-ribosyl)glycinamide from 5-phospho-alpha-D-ribose 1-diphosphate: step 2/2. The protein is Phosphoribosylamine--glycine ligase of Vibrio parahaemolyticus serotype O3:K6 (strain RIMD 2210633).